Here is a 434-residue protein sequence, read N- to C-terminus: Tol-Pal system protein TolB (434 aa).

The N-terminal stretch at 1 to 21 (MIVRRALALAALALAASPALA) is a signal peptide. The tract at residues 411–434 (GDRQTPVTSGKTDLAAPAWGPLAP) is disordered.

The protein belongs to the TolB family. The Tol-Pal system is composed of five core proteins: the inner membrane proteins TolA, TolQ and TolR, the periplasmic protein TolB and the outer membrane protein Pal. They form a network linking the inner and outer membranes and the peptidoglycan layer.

It is found in the periplasm. Functionally, part of the Tol-Pal system, which plays a role in outer membrane invagination during cell division and is important for maintaining outer membrane integrity. The protein is Tol-Pal system protein TolB of Anaeromyxobacter sp. (strain K).